A 376-amino-acid polypeptide reads, in one-letter code: Flagellin B (376 aa).

Residues 103-130 (SNSSSERQAIQEEVSALNDELNRIAETT) are a coiled coil.

It belongs to the bacterial flagellin family. In terms of assembly, heteromer of multiple flagellin subunits including FlaA, FlaB, FlaC, FlaD and possibly FlaE.

The protein localises to the secreted. It localises to the bacterial flagellum. Its function is as follows. Flagellin is the subunit protein which polymerizes to form the filaments of bacterial flagella. FlaB is not essential for flagellar synthesis and motility. This chain is Flagellin B (flaB), found in Vibrio anguillarum (Listonella anguillarum).